Here is a 176-residue protein sequence, read N- to C-terminus: Peptide deformylase (176 aa).

Fe cation-binding residues include C94 and H136. E137 is an active-site residue. H140 provides a ligand contact to Fe cation.

It belongs to the polypeptide deformylase family. The cofactor is Fe(2+).

The catalysed reaction is N-terminal N-formyl-L-methionyl-[peptide] + H2O = N-terminal L-methionyl-[peptide] + formate. In terms of biological role, removes the formyl group from the N-terminal Met of newly synthesized proteins. Requires at least a dipeptide for an efficient rate of reaction. N-terminal L-methionine is a prerequisite for activity but the enzyme has broad specificity at other positions. In Mesorhizobium japonicum (strain LMG 29417 / CECT 9101 / MAFF 303099) (Mesorhizobium loti (strain MAFF 303099)), this protein is Peptide deformylase.